Here is a 1372-residue protein sequence, read N- to C-terminus: Capping protein, Arp2/3 and myosin-I linker protein 3 (1372 aa).

A disordered region spans residues 126 to 151 (RGNADTPEGPRDTSPNSETSTSTTHS). The span at 138 to 151 (TSPNSETSTSTTHS) shows a compositional bias: low complexity. LRR repeat units follow at residues 244 to 264 (SLEELVLDNAGLKTDFVQKLA), 274 to 295 (VLHALTLSHNPIEDKGFLSLSQ), 303 to 323 (GLTKLCLAKTAISPRGLQALG), 335 to 357 (SLRYLDLSKNPGLLATDEANALY), 365 to 385 (ALVHLDLSGTDCVIDLLLGAL), 392 to 413 (HLTYLNLARNSCSHRKGREAPP), 424 to 444 (TLSHVNLSATKLPLEALRALL), 455 to 475 (DLHLDLSSCELRSAGAQALQE), 482 to 501 (CVGSLDLSDNGFDSDLLTLV), and 509 to 530 (SLKHLFLGKNFNVKAKTLEEIL). Disordered stretches follow at residues 865–900 (TLSDPPGCPGQGQDLSSRGRGRNHDHEETTDDELGT), 970–1003 (KLRHQTQGRPRPPRTTPPGPGRPSMPAPGTRQEN), and 1024–1372 (ESSS…PGTD). Residues 982–995 (PRTTPPGPGRPSMP) show a composition bias toward pro residues. Residues 1040 to 1073 (SEAPLPPLQKKRRRGLFHFRRPRSFKGDRGPGSP) form a necessary for localization at the cell membrane region. Basic residues predominate over residues 1048 to 1063 (QKKRRRGLFHFRRPRS). The segment covering 1079–1098 (LPPPPPPPPTQESPPSPDPP) has biased composition (pro residues). The segment covering 1099–1109 (SLGNNSSPCWS) has biased composition (low complexity). 2 stretches are compositionally biased toward basic and acidic residues: residues 1163 to 1177 (ERAKGWSFDGKREGP) and 1219 to 1229 (RRAEATWHIAE). Polar residues predominate over residues 1233–1244 (PNHSCQSPSPAS). A compositionally biased stretch (basic and acidic residues) spans 1348–1361 (QSCDKLEPDRRRPP).

Belongs to the CARMIL family. As to expression, widely expressed, with much higher levels in fetal tissues than in adult ones. Up-regulated in certain cancer tissues.

Its subcellular location is the cytoplasm. It is found in the cell membrane. In Homo sapiens (Human), this protein is Capping protein, Arp2/3 and myosin-I linker protein 3.